The following is a 262-amino-acid chain: 3-methyl-2-oxobutanoate hydroxymethyltransferase (262 aa).

Mg(2+) is bound by residues Asp-44 and Asp-83. 3-methyl-2-oxobutanoate contacts are provided by residues 44–45 (DS), Asp-83, and Lys-111. Residue Glu-113 coordinates Mg(2+). Glu-180 acts as the Proton acceptor in catalysis.

Belongs to the PanB family. Homodecamer; pentamer of dimers. Requires Mg(2+) as cofactor.

It is found in the cytoplasm. It carries out the reaction 3-methyl-2-oxobutanoate + (6R)-5,10-methylene-5,6,7,8-tetrahydrofolate + H2O = 2-dehydropantoate + (6S)-5,6,7,8-tetrahydrofolate. The protein operates within cofactor biosynthesis; (R)-pantothenate biosynthesis; (R)-pantoate from 3-methyl-2-oxobutanoate: step 1/2. Catalyzes the reversible reaction in which hydroxymethyl group from 5,10-methylenetetrahydrofolate is transferred onto alpha-ketoisovalerate to form ketopantoate. This chain is 3-methyl-2-oxobutanoate hydroxymethyltransferase, found in Alcanivorax borkumensis (strain ATCC 700651 / DSM 11573 / NCIMB 13689 / SK2).